The chain runs to 918 residues: GPI ethanolamine phosphate transferase 3 (918 aa).

Residues 16–36 traverse the membrane as a helical segment; it reads IGTWKYIQACIFFAIILISNF. Residues asparagine 54, asparagine 71, asparagine 101, asparagine 197, and asparagine 399 are each glycosylated (N-linked (GlcNAc...) asparagine). 15 consecutive transmembrane segments (helical) span residues 429-449, 459-479, 486-506, 523-543, 547-563, 567-587, 616-636, 651-671, 687-707, 715-735, 738-758, 762-782, 813-833, 853-873, and 887-907; these read LFPM…LALL, MSAN…ILIL, SPFP…LNSF, FSIF…FTVW, LCHF…FCKC, MSPL…LQVI, TLIV…ILQL, LSIL…HHVF, SLAN…FFLL, INVI…LSFL, PLGH…IQLK, PSVG…SHFF, IFMF…IPLF, FSFI…AGFF, and FMLS…QCFG.

The protein belongs to the PIGG/PIGN/PIGO family. PIGO subfamily. Post-translationally, glycosylated.

It localises to the endoplasmic reticulum membrane. Its pathway is glycolipid biosynthesis; glycosylphosphatidylinositol-anchor biosynthesis. Involved in glycosylphosphatidylinositol-anchor biosynthesis. Transfers ethanolamine phosphate to the GPI third mannose which links the GPI-anchor to the C-terminus of the proteins by an amide bond. Involved in cell wall biosynthesis. The chain is GPI ethanolamine phosphate transferase 3 (gpi13) from Schizosaccharomyces pombe (strain 972 / ATCC 24843) (Fission yeast).